The sequence spans 184 residues: Isopentenyl-diphosphate Delta-isomerase (184 aa).

The Mn(2+) site is built by histidine 26 and histidine 33. The region spanning 31–165 (PLHLAFSCYL…PSAFSPWLGL (135 aa)) is the Nudix hydrolase domain. Cysteine 68 is an active-site residue. Residue histidine 70 participates in Mn(2+) binding. Glutamate 88 contributes to the Mg(2+) binding site. Positions 115 and 117 each coordinate Mn(2+). Glutamate 117 is an active-site residue.

This sequence belongs to the IPP isomerase type 1 family. Mg(2+) is required as a cofactor. The cofactor is Mn(2+).

It is found in the cytoplasm. It catalyses the reaction isopentenyl diphosphate = dimethylallyl diphosphate. Its pathway is isoprenoid biosynthesis; dimethylallyl diphosphate biosynthesis; dimethylallyl diphosphate from isopentenyl diphosphate: step 1/1. Catalyzes the 1,3-allylic rearrangement of the homoallylic substrate isopentenyl (IPP) to its highly electrophilic allylic isomer, dimethylallyl diphosphate (DMAPP). The protein is Isopentenyl-diphosphate Delta-isomerase of Paenarthrobacter aurescens (strain TC1).